The following is a 128-amino-acid chain: Large ribosomal subunit protein bL17 (128 aa).

The protein belongs to the bacterial ribosomal protein bL17 family. In terms of assembly, part of the 50S ribosomal subunit. Contacts protein L32.

In Hydrogenovibrio crunogenus (strain DSM 25203 / XCL-2) (Thiomicrospira crunogena), this protein is Large ribosomal subunit protein bL17.